A 261-amino-acid polypeptide reads, in one-letter code: Cytochrome c oxidase subunit 3 (261 aa).

Residues 1–15 (MAHQSHAYHMVKPSP) are Mitochondrial matrix-facing. Residues 16-34 (WPLTGALSALLTTSGLTMW) traverse the membrane as a helical segment. At 35 to 40 (FHFHST) the chain is on the mitochondrial intermembrane side. The helical transmembrane segment at 41 to 66 (TLLLTGLLTNALTMYQWWRDVVREST) threads the bilayer. Topologically, residues 67–72 (YQGHHT) are mitochondrial matrix. The helical transmembrane segment at 73-105 (LPVQKGLRYGMILFITSEVFFFAGFFWAFYHSS) threads the bilayer. Residues 106–128 (LAPTPQLGGHWPPTGIIPLNPLE) lie on the Mitochondrial intermembrane side of the membrane. Residues 129–152 (VPLLNTSVLLASGVSITWAHHSLM) form a helical membrane-spanning segment. Topologically, residues 153-155 (ENN) are mitochondrial matrix. The chain crosses the membrane as a helical span at residues 156–183 (RTQMIQALLITILLGIYFTLLQASEYIE). Topologically, residues 184-190 (APFTISD) are mitochondrial intermembrane. The chain crosses the membrane as a helical span at residues 191–223 (GIYGSTFFMATGFHGLHVIIGSTFLTVCLARQL). Residues 224-232 (LFHFTSKHH) are Mitochondrial matrix-facing. The chain crosses the membrane as a helical span at residues 233-256 (FGFEAAAWYWHFVDVVWLFLYVSI). Over 257–261 (YWWGS) the chain is Mitochondrial intermembrane.

This sequence belongs to the cytochrome c oxidase subunit 3 family. In terms of assembly, component of the cytochrome c oxidase (complex IV, CIV), a multisubunit enzyme composed of 14 subunits. The complex is composed of a catalytic core of 3 subunits MT-CO1, MT-CO2 and MT-CO3, encoded in the mitochondrial DNA, and 11 supernumerary subunits COX4I, COX5A, COX5B, COX6A, COX6B, COX6C, COX7A, COX7B, COX7C, COX8 and NDUFA4, which are encoded in the nuclear genome. The complex exists as a monomer or a dimer and forms supercomplexes (SCs) in the inner mitochondrial membrane with NADH-ubiquinone oxidoreductase (complex I, CI) and ubiquinol-cytochrome c oxidoreductase (cytochrome b-c1 complex, complex III, CIII), resulting in different assemblies (supercomplex SCI(1)III(2)IV(1) and megacomplex MCI(2)III(2)IV(2)).

It is found in the mitochondrion inner membrane. It carries out the reaction 4 Fe(II)-[cytochrome c] + O2 + 8 H(+)(in) = 4 Fe(III)-[cytochrome c] + 2 H2O + 4 H(+)(out). Component of the cytochrome c oxidase, the last enzyme in the mitochondrial electron transport chain which drives oxidative phosphorylation. The respiratory chain contains 3 multisubunit complexes succinate dehydrogenase (complex II, CII), ubiquinol-cytochrome c oxidoreductase (cytochrome b-c1 complex, complex III, CIII) and cytochrome c oxidase (complex IV, CIV), that cooperate to transfer electrons derived from NADH and succinate to molecular oxygen, creating an electrochemical gradient over the inner membrane that drives transmembrane transport and the ATP synthase. Cytochrome c oxidase is the component of the respiratory chain that catalyzes the reduction of oxygen to water. Electrons originating from reduced cytochrome c in the intermembrane space (IMS) are transferred via the dinuclear copper A center (CU(A)) of subunit 2 and heme A of subunit 1 to the active site in subunit 1, a binuclear center (BNC) formed by heme A3 and copper B (CU(B)). The BNC reduces molecular oxygen to 2 water molecules using 4 electrons from cytochrome c in the IMS and 4 protons from the mitochondrial matrix. In Pongo abelii (Sumatran orangutan), this protein is Cytochrome c oxidase subunit 3 (MT-CO3).